A 514-amino-acid polypeptide reads, in one-letter code: Protein Tube (514 aa).

5 disordered regions span residues 226–250 (VPQQ…RSSR), 255–274 (TASN…SNTA), 324–343 (LDAG…STST), 366–385 (ASDA…VPDM), and 413–514 (NGAK…ELQQ). Residues 259 to 274 (VAPTTASNAPSASNTA) show a composition bias toward low complexity. Positions 422–433 (ADNNSSGTNSLS) are enriched in polar residues. Residues 434-460 (NDDDEQKEDDDDDDDDDVVDVDDEEAD) show a composition bias toward acidic residues. A compositionally biased stretch (polar residues) spans 477–514 (TTVTCTSGENSFEFTNDSSSASNDDYTNNIPNLSELQQ).

As to expression, maternal and zygotic gene product.

It localises to the cytoplasm. Required for the determination of embryonic dorsoventral polarity. Is involved in transduction of information regulating nuclear import of dorsal protein. The chain is Protein Tube (tub) from Drosophila virilis (Fruit fly).